Consider the following 270-residue polypeptide: Ethanolamine ammonia-lyase small subunit (270 aa).

Residues Val-166, Glu-187, and Cys-216 each coordinate adenosylcob(III)alamin.

Belongs to the EutC family. The basic unit is a heterodimer which dimerizes to form tetramers. The heterotetramers trimerize; 6 large subunits form a core ring with 6 small subunits projecting outwards. Requires adenosylcob(III)alamin as cofactor.

Its subcellular location is the bacterial microcompartment. The enzyme catalyses ethanolamine = acetaldehyde + NH4(+). It participates in amine and polyamine degradation; ethanolamine degradation. Catalyzes the deamination of various vicinal amino-alcohols to oxo compounds. Allows this organism to utilize ethanolamine as the sole source of nitrogen and carbon in the presence of external vitamin B12. The polypeptide is Ethanolamine ammonia-lyase small subunit (Ralstonia nicotianae (strain ATCC BAA-1114 / GMI1000) (Ralstonia solanacearum)).